A 469-amino-acid polypeptide reads, in one-letter code: Glutamine synthetase (469 aa).

A GS beta-grasp domain is found at 14–99 (NDVKFVDLRF…VCDILDPVSG (86 aa)). The GS catalytic domain maps to 106-469 (RRGTAKKAEA…PVEYDMYYSA (364 aa)). Mg(2+) is bound by residues E131 and E133. An ATP-binding site is contributed by E209. The Mg(2+) site is built by E214 and D221. Residues 265 to 266 (NG) and G266 contribute to the L-glutamate site. H270 contributes to the Mg(2+) binding site. Residues 272–274 (HQS) and S274 each bind ATP. L-glutamate contacts are provided by R322, E328, and R340. ATP contacts are provided by R340, R345, and K353. E358 contacts Mg(2+). R360 contacts L-glutamate. At Y398 the chain carries O-AMP-tyrosine.

Belongs to the glutamine synthetase family. Oligomer of 12 subunits arranged in the form of two hexameric ring. Requires Mg(2+) as cofactor.

The protein localises to the cytoplasm. The catalysed reaction is L-glutamate + NH4(+) + ATP = L-glutamine + ADP + phosphate + H(+). Its activity is regulated as follows. The activity of this enzyme could be controlled by adenylation under conditions of abundant glutamine. In terms of biological role, catalyzes the ATP-dependent biosynthesis of glutamine from glutamate and ammonia. The sequence is that of Glutamine synthetase from Rhizobium leguminosarum bv. viciae.